The following is a 774-amino-acid chain: Ent-beyerene synthase KSL4, chloroplastic (774 aa).

A chloroplast-targeting transit peptide spans 1–35; the sequence is MLLGSTNTLRISSHGKEWEGKTLTGMPLGKVNQRV. D525, D529, N668, D669, T672, and E676 together coordinate Mg(2+). The short motif at 525–529 is the DDXXD motif element; sequence DDFFD.

It belongs to the terpene synthase family. Mg(2+) serves as cofactor.

It localises to the plastid. Its subcellular location is the chloroplast. It catalyses the reaction ent-copalyl diphosphate = ent-beyerene + diphosphate. It carries out the reaction ent-copalyl diphosphate = ent-atiserene + diphosphate. The enzyme catalyses ent-copalyl diphosphate = ent-kaur-16-ene + diphosphate. The protein operates within secondary metabolite biosynthesis; terpenoid biosynthesis. Its function is as follows. Diterpene cyclase involved in the biosynthesis of labdane-related diterpenoids (LRDs) natural products. Catalyzes the cyclization of ent-CDP into ent-beyerene as a major and ent-kaurene and ent-atiserene as minor products. The chain is Ent-beyerene synthase KSL4, chloroplastic from Ricinus communis (Castor bean).